The following is a 166-amino-acid chain: ATP synthase subunit b (166 aa).

The chain crosses the membrane as a helical span at residues Thr15–Val37.

It belongs to the ATPase B chain family. As to quaternary structure, F-type ATPases have 2 components, F(1) - the catalytic core - and F(0) - the membrane proton channel. F(1) has five subunits: alpha(3), beta(3), gamma(1), delta(1), epsilon(1). F(0) has three main subunits: a(1), b(2) and c(10-14). The alpha and beta chains form an alternating ring which encloses part of the gamma chain. F(1) is attached to F(0) by a central stalk formed by the gamma and epsilon chains, while a peripheral stalk is formed by the delta and b chains.

The protein resides in the cell membrane. Functionally, f(1)F(0) ATP synthase produces ATP from ADP in the presence of a proton or sodium gradient. F-type ATPases consist of two structural domains, F(1) containing the extramembraneous catalytic core and F(0) containing the membrane proton channel, linked together by a central stalk and a peripheral stalk. During catalysis, ATP synthesis in the catalytic domain of F(1) is coupled via a rotary mechanism of the central stalk subunits to proton translocation. In terms of biological role, component of the F(0) channel, it forms part of the peripheral stalk, linking F(1) to F(0). This chain is ATP synthase subunit b, found in Lactobacillus gasseri (strain ATCC 33323 / DSM 20243 / BCRC 14619 / CIP 102991 / JCM 1131 / KCTC 3163 / NCIMB 11718 / NCTC 13722 / AM63).